The following is a 320-amino-acid chain: Aminoacyl tRNA synthase complex-interacting multifunctional protein 2 (320 aa).

Positions 82 to 162 (TPDADLDVTN…HTHSSVKSVP (81 aa)) are interaction with PRKN. The tract at residues 162–225 (PENLLKCFGE…FLFSLFGQKH (64 aa)) is interaction with TP53. In terms of domain architecture, GST C-terminal spans 220-317 (LFGQKHNAVN…NLAPFNTALK (98 aa)).

In terms of assembly, part of the multisynthetase complex (MSC), a multisubunit complex that groups tRNA ligases for Arg (RARS1), Asp (DARS1), Gln (QARS1), Ile (IARS1), Leu (LARS1), Lys (KARS1), Met (MARS1) the bifunctional ligase for Glu and Pro (EPRS1) and the auxiliary subunits AIMP1/p43, AIMP2/p38 and EEF1E1/p18. Interacts (via N-terminus) with KARS1. Interacts with EPRS1. Forms a linear complex that contains MARS1, EEF1E1, EPRS1 and AIMP2 that is at the core of the multisubunit complex. Binds FUBP1 (via C-terminus). Interacts in both its unphosphorylated and phosphorylated forms with p53/TP53 (via N-terminus) in the nucleus following UV irradiation. Interacts (via N-terminus) with PRKN/parkin (via first RING-type domain). Interacts with TARS3. In terms of processing, phosphorylated on serine residues in response to UV irradiation. Ubiquitinated by PRKN, leading to its degradation by the proteasome. Mutant PRKN fails to ubiquitinate AIMP2 efficiently, allowing its accumulation which may contribute to neurodegeneration associated with Parkinson disease.

It localises to the cytoplasm. Its subcellular location is the cytosol. The protein localises to the nucleus. In terms of biological role, required for assembly and stability of the aminoacyl-tRNA synthase complex. Mediates ubiquitination and degradation of FUBP1, a transcriptional activator of MYC, leading to MYC down-regulation which is required for aveolar type II cell differentiation. Blocks MDM2-mediated ubiquitination and degradation of p53/TP53. Functions as a proapoptotic factor. This Homo sapiens (Human) protein is Aminoacyl tRNA synthase complex-interacting multifunctional protein 2 (AIMP2).